Here is a 689-residue protein sequence, read N- to C-terminus: DNA ligase (689 aa).

NAD(+)-binding positions include 51-55 (DSEYD), 100-101 (SL), and Glu129. The N6-AMP-lysine intermediate role is filled by Lys131. Arg152, Glu189, Lys308, and Lys332 together coordinate NAD(+). Zn(2+) contacts are provided by Cys426, Cys429, Cys444, and Cys450. Positions 609–689 (ADEQPLKGQT…ELLALLAANR (81 aa)) constitute a BRCT domain.

This sequence belongs to the NAD-dependent DNA ligase family. LigA subfamily. It depends on Mg(2+) as a cofactor. Mn(2+) is required as a cofactor.

It catalyses the reaction NAD(+) + (deoxyribonucleotide)n-3'-hydroxyl + 5'-phospho-(deoxyribonucleotide)m = (deoxyribonucleotide)n+m + AMP + beta-nicotinamide D-nucleotide.. Its function is as follows. DNA ligase that catalyzes the formation of phosphodiester linkages between 5'-phosphoryl and 3'-hydroxyl groups in double-stranded DNA using NAD as a coenzyme and as the energy source for the reaction. It is essential for DNA replication and repair of damaged DNA. In Shewanella oneidensis (strain ATCC 700550 / JCM 31522 / CIP 106686 / LMG 19005 / NCIMB 14063 / MR-1), this protein is DNA ligase.